A 197-amino-acid polypeptide reads, in one-letter code: Ribose 1,5-bisphosphate phosphokinase PhnN (197 aa).

21–28 (GPSGAGKD) provides a ligand contact to ATP.

This sequence belongs to the ribose 1,5-bisphosphokinase family.

The enzyme catalyses alpha-D-ribose 1,5-bisphosphate + ATP = 5-phospho-alpha-D-ribose 1-diphosphate + ADP. It functions in the pathway metabolic intermediate biosynthesis; 5-phospho-alpha-D-ribose 1-diphosphate biosynthesis; 5-phospho-alpha-D-ribose 1-diphosphate from D-ribose 5-phosphate (route II): step 3/3. Catalyzes the phosphorylation of ribose 1,5-bisphosphate to 5-phospho-D-ribosyl alpha-1-diphosphate (PRPP). This Rhizobium etli (strain CIAT 652) protein is Ribose 1,5-bisphosphate phosphokinase PhnN.